The chain runs to 499 residues: Putative antiporter subunit mnhD2 (499 aa).

14 helical membrane passes run 3–23 (LSNLLILPMLLPFLCALILVF), 33–53 (YLYLGTMTITTIISLMLLIYV), 79–99 (LSLIMVTTASFVITLIMAYGF), 109–129 (YHLPSFILFLSVGVIGSFLTS), 131–151 (LFNLYVMFEIMLLASFVLITL), 162–182 (IIYVVLNIIGSWLFLLGIGLL), 210–230 (ISLIFLVAFSAKAALVLFMWL), 241–261 (LAALFAALMTKVGAYALIRFF), 272–292 (IHPLLATMAAITMVIGAIGVI), 309–329 (IGFIILGLGTNTFAGINGAIF), 331–351 (LVNDIVVKTLLFFIIGSLVYI), 370–390 (FGVAFIIMIFAIGGVPPFSGF), 404–424 (GNYIGLALMIITSLIAMYSLF), and 452–472 (ILSILVVVVIAIGIAAPVVLN).

The protein belongs to the CPA3 antiporters (TC 2.A.63) subunit D family. In terms of assembly, may form a heterooligomeric complex that consists of seven subunits: mnhA2, mnhB2, mnhC2, mnhD2, mnhE2, mnhF2 and mnhG2.

It localises to the cell membrane. Its function is as follows. Expression of the mnh2 operon in E.coli is not able to catalyze Na(+)Li(+)/H(+) antiport. It does however confer higher growth rates than the control strain at up to pH 9.5. The operon may encode an NADH-ubiquinone oxidoreductase. In Staphylococcus aureus, this protein is Putative antiporter subunit mnhD2 (mnhD2).